Consider the following 73-residue polypeptide: NAD(P)H-quinone oxidoreductase subunit L (73 aa).

The next 2 membrane-spanning stretches (helical) occupy residues 6–26 (SLIGLTYAGLAVLYLLVLPLL) and 44–64 (VLMFFLVLFFFPGMVLLAPFM).

Belongs to the complex I NdhL subunit family. In terms of assembly, NDH-1 can be composed of about 15 different subunits; different subcomplexes with different compositions have been identified which probably have different functions.

Its subcellular location is the cellular thylakoid membrane. It carries out the reaction a plastoquinone + NADH + (n+1) H(+)(in) = a plastoquinol + NAD(+) + n H(+)(out). The catalysed reaction is a plastoquinone + NADPH + (n+1) H(+)(in) = a plastoquinol + NADP(+) + n H(+)(out). Functionally, NDH-1 shuttles electrons from an unknown electron donor, via FMN and iron-sulfur (Fe-S) centers, to quinones in the respiratory and/or the photosynthetic chain. The immediate electron acceptor for the enzyme in this species is believed to be plastoquinone. Couples the redox reaction to proton translocation, and thus conserves the redox energy in a proton gradient. Cyanobacterial NDH-1 also plays a role in inorganic carbon-concentration. This is NAD(P)H-quinone oxidoreductase subunit L from Synechococcus sp. (strain JA-2-3B'a(2-13)) (Cyanobacteria bacterium Yellowstone B-Prime).